Consider the following 252-residue polypeptide: Flap endonuclease Xni (252 aa).

Aspartate 105 is a binding site for Mg(2+). Positions 162-250 (ERTQFIDYLA…LNANLSQFRL (89 aa)) constitute a 5'-3' exonuclease domain. Leucine 172, alanine 173, proline 181, valine 183, and isoleucine 186 together coordinate K(+). The interval 185 to 190 (GIGPKS) is interaction with DNA.

It belongs to the Xni family. Requires Mg(2+) as cofactor. K(+) is required as a cofactor.

Functionally, has flap endonuclease activity. During DNA replication, flap endonucleases cleave the 5'-overhanging flap structure that is generated by displacement synthesis when DNA polymerase encounters the 5'-end of a downstream Okazaki fragment. The protein is Flap endonuclease Xni of Shewanella woodyi (strain ATCC 51908 / MS32).